Here is a 456-residue protein sequence, read N- to C-terminus: Transforming growth factor beta-1-induced transcript 1 protein (456 aa).

Methionine 1 carries the post-translational modification N-acetylmethionine. Residues 1-79 (MEDLDALLSD…ATPPFSSSCG (79 aa)) are disordered. A transcription activation region spans residues 1-195 (MEDLDALLSD…DTPSPPGPTS (195 aa)). Residues 1 to 235 (MEDLDALLSD…CNKPIAGQVV (235 aa)) form an interaction with PTK2B/PYK2 region. The LD motif 1 motif lies at 3-15 (DLDALLSDLETTT). At threonine 33 the chain carries Phosphothreonine. Phosphotyrosine is present on tyrosine 55. Position 63 is a phosphoserine (serine 63). The interaction with PTK2/FAK1 stretch occupies residues 78-131 (CGVLGTGLCELDRLLQELNATQFNITDEIMSQFPSSKETAGEQKEDQSEDKKRP). The short motif at 87–99 (ELDRLLQELNATQ) is the LD motif 2 element. The disordered stretch occupies residues 109-146 (QFPSSKETAGEQKEDQSEDKKRPSPPPSPSPVLPKPSA). Residues 116–130 (TAGEQKEDQSEDKKR) show a composition bias toward basic and acidic residues. A phosphoserine mark is found at serine 132, serine 136, serine 138, serine 159, serine 181, and serine 189. Positions 132–142 (SPPPSPSPVLP) are enriched in pro residues. The LD motif 3 motif lies at 152-163 (ELDRLMASLSDF). A disordered region spans residues 166–200 (QNHLPASGPTPPPVPSSMSEDTPSPPGPTSKGSLD). The LD motif 4 motif lies at 198–210 (SLDTMLGLLQSDL). 4 consecutive LIM zinc-binding domains span residues 221 to 280 (GLCG…RFSP), 281 to 338 (RCGL…QLFA), 339 to 398 (PRCQ…RRGS), and 399 to 456 (LCAT…KLFG). The residue at position 398 (serine 398) is a Phosphoserine. Phosphothreonine is present on threonine 402.

Belongs to the paxillin family. As to quaternary structure, homooligomer. Interacts with CRIP2, HSPB1, ILK, LIMS1, LIMS2, NCK2, NUDT16L1, PAK, PPARG, PTPN12, TCF3, TCF7L2 and VCL. Forms a complex with GIT1 and ARHGEF7. Interacts with AR/androgen receptor in a ligand-dependent manner. Interacts with CSK, LYN, MAPK15, NR3C1, PPARG, PTK2/FAK1, PTK2B/PYK2, SLC6A3, SLC6A4, SMAD3, SRC and talin. Interacts (via LIM zinc-binding domain 2) with CBLC (via RING-type zinc finger); the interaction is direct and enhances CBLC E3 ubiquitin-protein ligase activity. In terms of processing, phosphorylated by gonadotropin-releasing hormone-activated SRC.

The protein localises to the cell junction. It is found in the focal adhesion. The protein resides in the nucleus matrix. Its subcellular location is the cytoplasm. It localises to the cytoskeleton. Functions as a molecular adapter coordinating multiple protein-protein interactions at the focal adhesion complex and in the nucleus. Links various intracellular signaling modules to plasma membrane receptors and regulates the Wnt and TGFB signaling pathways. May also regulate SLC6A3 and SLC6A4 targeting to the plasma membrane hence regulating their activity. In the nucleus, functions as a nuclear receptor coactivator regulating glucocorticoid, androgen, mineralocorticoid and progesterone receptor transcriptional activity. May play a role in the processes of cell growth, proliferation, migration, differentiation and senescence. May have a zinc-dependent DNA-binding activity. In Bos taurus (Bovine), this protein is Transforming growth factor beta-1-induced transcript 1 protein (TGFB1I1).